A 265-amino-acid polypeptide reads, in one-letter code: Type-1Ba cytolytic delta-endotoxin (265 aa).

It belongs to the cyt1/cyt2 endotoxin family. In terms of processing, active after proteolytic processing.

Its function is as follows. Kills the larvae of dipteran insects by making pores in the epithelial cell membrane of the insect midgut. The sequence is that of Type-1Ba cytolytic delta-endotoxin (cyt1Ba1) from Bacillus thuringiensis subsp. neoleoensis.